Here is a 462-residue protein sequence, read N- to C-terminus: MTIEATEGHVSKGMLAKGDSTSPIPTIFDVLSRDHVFVDSHQKVWWERTGQLLDKILASAGYNPARRLEALTFYIQVLIPFLGPHPHQFRSAITRSGLPLEFSVNYQQRGDIDPVVRIGFEPVAAASGTEIDPYNQIPVVDLLNQLEVLNIPAFDPSLFRYFLDAHTVNGHEKGLLKEKKIEGSELTSQSAFGFDLKEKAISVKGYTFPAIKCTLNEKGFGNFISESIQPLAAQMGPIPSFDMVHSYLEGTNGYSQFAFWSFDCVDPAQSRLKLYSSHNSVVWSKVEEIWTLGGRAKSPVVQEGLVYLKELWELTKLSEGHREFNGGFDDGKDATATPMVWNYEMKIGEAFPLTKFYFPIHGESDQNVIGGLAQFLSRIGLSKYGDNYEATVRHYLYDFSTSPVPCKNDSIANFDSPERDLSKTARLTSWISFAYTEKTGVYLSVYYHSSDEYPWLELEEIN.

Glu101 is a binding site for brevianamide F. Dimethylallyl diphosphate contacts are provided by Arg117, Lys204, Tyr206, Lys273, Tyr275, Tyr357, Tyr442, and Tyr446.

This sequence belongs to the tryptophan dimethylallyltransferase family.

Its pathway is alkaloid biosynthesis. Its function is as follows. Prenyltransferase; part of the gene cluster that mediates the biosynthesis of paraherquamide, a fungal indole alkaloid that belongs to a family of natural products containing a characteristic bicyclo[2.2.2]diazaoctane core. The first steps in the biosynthesis of paraherquamide is the production of the beta-methyl-proline precursor from L-isoleucine. They require oxidation of a terminally hydroxylated L-isoleucine to the corresponding aldehyde by enzymes which have still to be identified. Spontaneous cyclization and dehydration would yield the 4-methyl pyrolline-5-carboxylic acid, which is then reduced by the pyrroline-5-carboxylate reductase phqD leading to the beta-methyl-proline precursor. The next step of paraherquamide biosynthesis involves coupling of beta-methyl-proline and L-tryptophan by the bimodular NRPS phqB, to produce a monooxopiperazine intermediate. The reductase (R) domain of phqB utilizes NADPH for hydride transfer to reduce the thioester bond of the T domain-tethered linear dipeptide to a hemithioaminal intermediate, which spontaneously cleaves the C-S bond to release the aldehyde product. This compound undergoes spontaneous cyclization and dehydration to give a dienamine which is reverse prenylated at C-2 by the reverse prenyltransferase phqJ. The other prenyltransferase present in the cluster, phqI may be a redundant gene in the pathway. During biosynthetic assembly, the key step to produce the polycyclic core is catalyzed by the bifunctional reductase and intramolecular [4+2] Diels-Alderase, phqE, resulting in formation of the [2.2.2] diazaoctane intermediate preparaherquamide. Following formation of preparaherquamide, an indole 2,3-epoxidation-initiated pinacol-like rearrangement is catalyzed by the phqK FAD-dependent monooxygenase. The prenyltransferase phqA, the cytochrome P450 monooxygenase phqL, and the FAD-linked oxidoreductase phqH (or the cytochrome P450 monooxygenase phqM), are proposed to be involved in the formation of the pyran ring. The FAD-dependent monooxygenase phqK is likely responsible for generation of the spiro-oxindole, and the N-methylation is likely mediated by the phqN methyltransferase leading to the isolable natural product paraherquamide F. However, the order of these biosynthetic steps has still to be determined. In late-stage paraherquamide biosynthesis, the third P450 monooxygenase, phqO, is probably responsible for the C-14 hydroxylation, transforming paraherquamide F to paraherquamide G, and paraherquamide E to the final product paraherquamide A. The expansion from the 6-membered ring pyran (in paraherquamides F and G) to the 7-membered dioxepin ring (in paraherquamides A and E) represents a poorly understood but intriguing process that probably involves the 2-oxoglutarate-dependent dioxygenase phqC. Finally, the remaining members of the paraherquamide cluster, including phqI as well as phqM (or phqH), do not have a clearly prescribed role and appear to be redundant. The polypeptide is Prenyltransferase phqI (Penicillium fellutanum).